The following is a 248-amino-acid chain: Probable transcriptional regulatory protein Acid345_2125 (248 aa).

Belongs to the TACO1 family.

It localises to the cytoplasm. This is Probable transcriptional regulatory protein Acid345_2125 from Koribacter versatilis (strain Ellin345).